Reading from the N-terminus, the 341-residue chain is MVTDQGGGTSEADGGPVRHIPVLLKEVLAALDPAPGKIILDGTFGAGGYASAILDAGADVVALDRDPTAIAAGQSMMHASGGRLKLVHSRFSDLAEHAPAQGLDGVVLDIGVSSMQIDEAERGFSFQKKGPLDMRMSAAGVSAADVVNRAKVSDLIRIFGFLGEEKQAGRIARAIEKRRAETPFETTRDLANLIETVTPRKAKDKIHPATRVFQALRIFVNDELGELAHALFAAERALKPGGRLVVVTFHSLEDRIVKTFFQDRSGKAGGSRHLPLVTARAATFTPVGKPMVAASEEEASRNPRARSAKLRAGVRTEAPSPGADLSIFNLPELASLARLGG.

Residues 47–49 (GGY), aspartate 64, phenylalanine 91, aspartate 109, and glutamine 116 each bind S-adenosyl-L-methionine. Residues 292 to 319 (VAASEEEASRNPRARSAKLRAGVRTEAP) form a disordered region.

It belongs to the methyltransferase superfamily. RsmH family.

It localises to the cytoplasm. The catalysed reaction is cytidine(1402) in 16S rRNA + S-adenosyl-L-methionine = N(4)-methylcytidine(1402) in 16S rRNA + S-adenosyl-L-homocysteine + H(+). Its function is as follows. Specifically methylates the N4 position of cytidine in position 1402 (C1402) of 16S rRNA. The chain is Ribosomal RNA small subunit methyltransferase H from Rhizobium meliloti (strain 1021) (Ensifer meliloti).